The chain runs to 186 residues: Probable nicotinate-nucleotide adenylyltransferase (186 aa).

It belongs to the NadD family.

It carries out the reaction nicotinate beta-D-ribonucleotide + ATP + H(+) = deamido-NAD(+) + diphosphate. It functions in the pathway cofactor biosynthesis; NAD(+) biosynthesis; deamido-NAD(+) from nicotinate D-ribonucleotide: step 1/1. In terms of biological role, catalyzes the reversible adenylation of nicotinate mononucleotide (NaMN) to nicotinic acid adenine dinucleotide (NaAD). The polypeptide is Probable nicotinate-nucleotide adenylyltransferase (Tropheryma whipplei (strain Twist) (Whipple's bacillus)).